Reading from the N-terminus, the 429-residue chain is Glutamate-1-semialdehyde 2,1-aminomutase (429 aa).

Lys267 bears the N6-(pyridoxal phosphate)lysine mark.

Belongs to the class-III pyridoxal-phosphate-dependent aminotransferase family. HemL subfamily. As to quaternary structure, homodimer. Requires pyridoxal 5'-phosphate as cofactor.

The protein resides in the cytoplasm. It catalyses the reaction (S)-4-amino-5-oxopentanoate = 5-aminolevulinate. It participates in porphyrin-containing compound metabolism; protoporphyrin-IX biosynthesis; 5-aminolevulinate from L-glutamyl-tRNA(Glu): step 2/2. The protein is Glutamate-1-semialdehyde 2,1-aminomutase of Herpetosiphon aurantiacus (strain ATCC 23779 / DSM 785 / 114-95).